We begin with the raw amino-acid sequence, 281 residues long: BURP domain-containing protein BNM2C (281 aa).

The signal sequence occupies residues 1–25; the sequence is MASLRFSVTFPALFSLLLSLWVVDA. The BURP domain occupies 59–281; sequence FFKISDLKLG…PLDNIVWVSK (223 aa).

As to expression, expressed in the radicle of germinating seeds 2 days post-imbibition (DPI) and in roots of 30-DPI young plants. Expressed in the embryo and seed coat tissues of developing seeds. The protein accumulates only in seeds and only long after transcript accumulation becomes evident.

Its subcellular location is the protein storage vacuole. The chain is BURP domain-containing protein BNM2C from Brassica napus (Rape).